A 345-amino-acid polypeptide reads, in one-letter code: tRNA N6-adenosine threonylcarbamoyltransferase (345 aa).

The Fe cation site is built by histidine 111 and histidine 115. Substrate-binding positions include 134 to 138 (LVSGG), aspartate 167, glycine 180, and asparagine 276. Fe cation is bound at residue aspartate 304.

The protein belongs to the KAE1 / TsaD family. Fe(2+) serves as cofactor.

It localises to the cytoplasm. The enzyme catalyses L-threonylcarbamoyladenylate + adenosine(37) in tRNA = N(6)-L-threonylcarbamoyladenosine(37) in tRNA + AMP + H(+). Its function is as follows. Required for the formation of a threonylcarbamoyl group on adenosine at position 37 (t(6)A37) in tRNAs that read codons beginning with adenine. Is involved in the transfer of the threonylcarbamoyl moiety of threonylcarbamoyl-AMP (TC-AMP) to the N6 group of A37, together with TsaE and TsaB. TsaD likely plays a direct catalytic role in this reaction. In Alcanivorax borkumensis (strain ATCC 700651 / DSM 11573 / NCIMB 13689 / SK2), this protein is tRNA N6-adenosine threonylcarbamoyltransferase.